Consider the following 268-residue polypeptide: Large ribosomal subunit protein uL4 (268 aa).

Belongs to the universal ribosomal protein uL4 family. In terms of assembly, part of the 50S ribosomal subunit.

Functionally, one of the primary rRNA binding proteins, this protein initially binds near the 5'-end of the 23S rRNA. It is important during the early stages of 50S assembly. It makes multiple contacts with different domains of the 23S rRNA in the assembled 50S subunit and ribosome. In terms of biological role, forms part of the polypeptide exit tunnel. In Nanoarchaeum equitans (strain Kin4-M), this protein is Large ribosomal subunit protein uL4.